The chain runs to 167 residues: Transcription factor E (167 aa).

The 83-residue stretch at 8–90 folds into the HTH TFE/IIEalpha-type domain; that stretch reads NDKVIRGYLI…LWHLDFSDVE (83 aa).

This sequence belongs to the TFE family. Monomer. Interaction with RNA polymerase subunits RpoF and RpoE is necessary for Tfe stimulatory transcription activity. Able to interact with Tbp and RNA polymerase in the absence of DNA promoter. Interacts both with the preinitiation and elongation complexes.

Its function is as follows. Transcription factor that plays a role in the activation of archaeal genes transcribed by RNA polymerase. Facilitates transcription initiation by enhancing TATA-box recognition by TATA-box-binding protein (Tbp), and transcription factor B (Tfb) and RNA polymerase recruitment. Not absolutely required for transcription in vitro, but particularly important in cases where Tbp or Tfb function is not optimal. It dynamically alters the nucleic acid-binding properties of RNA polymerases by stabilizing the initiation complex and destabilizing elongation complexes. Seems to translocate with the RNA polymerase following initiation and acts by binding to the non template strand of the transcription bubble in elongation complexes. This Methanosarcina acetivorans (strain ATCC 35395 / DSM 2834 / JCM 12185 / C2A) protein is Transcription factor E.